We begin with the raw amino-acid sequence, 857 residues long: MSNLMYNKMWHQTQEALNSLLDKEFQKMSEPQANKVLVFQMLATFYINYVQIFRNMENVYDQIVHPQKRMLIRKVLDGVMGRILELKNEMVELEMTEFHYFDDILQDLKLSPQQLDVPIPRYFLKERLEVIKGREKILARILTECGLNLPVKYAAKSIALEEAVKLIQIAERARQGRLRALFMKQIFLQECRAKEMKLLGHRLLDTKLAALQIQKVWRGFHQCKKTVKEREEEMVFLGMKPSPLFNEVSDAIVQSKQVTNLRDEVQLKHEQDYQEALVNIKEDLKMLEGPDIKEHLQDQIRQWFIECRNLTGTFPDYPNEEDGGSALIFSNKTPEQVMGDIIATQEEEEKLKKKKKKEDKENKGKKGKKEKKEKKEKKVSLKEKAMKDEDEEWKMSPSLFLQLMEEGNSLYKDIWLNKDESWNFPQDYDPELIKEEKRKELEMEIRVQVDELMRQELKNLKLAVNREMEIPPRQKKGKKEQTIVFPREVFGNPRVALVSLHIRALWGISYLSFNNGTIESLYQELVEKGLLIQALKVNLSDYIGEYSYLGTTLRQVAIEPMPSLLDVRQLITLYGILPLGSAEVHERAPLVKSLLLAGPSGVGKKMLVHAICTETGANLFNLSALNIAGKYPGKTGLQMMIHLVFKVARQLQPSVVWIQDTEKTFYKKVPQAEKRFEPKRLKRYLPKLLKLLKPDDRILIVGTTHRPFDAELQPFCRVYQKIILVPRPDYASRYGKFHEVLWKEIILRNGGKLTNSLNISCLSKVTDGFTQGQIVQVIKDVLTERRLRQQAHKPLTAIEFITMMTNMNPVYREEEESFKNWYAKTPLGKKRVLSLTVGNKEKEKDKGKKGKRGKKKK.

The IQ domain occupies 206–235 (TKLAALQIQKVWRGFHQCKKTVKEREEEMV). The disordered stretch occupies residues 348 to 388 (EEKLKKKKKKEDKENKGKKGKKEKKEKKEKKVSLKEKAMKD). Over residues 365–375 (KKGKKEKKEKK) the composition is skewed to basic residues. Over residues 376–387 (EKKVSLKEKAMK) the composition is skewed to basic and acidic residues. 598-605 (GPSGVGKK) lines the ATP pocket. The interval 834–857 (SLTVGNKEKEKDKGKKGKRGKKKK) is disordered. The segment covering 847-857 (GKKGKRGKKKK) has biased composition (basic residues).

It belongs to the AAA ATPase family. DRC11 subfamily. As to quaternary structure, component of the nexin-dynein regulatory complex (N-DRC).

The protein resides in the cytoplasm. It is found in the cytoskeleton. The protein localises to the flagellum axoneme. Its function is as follows. Component of the nexin-dynein regulatory complex (N-DRC), a key regulator of ciliary/flagellar motility which maintains the alignment and integrity of the distal axoneme and regulates microtubule sliding in motile axonemes. This chain is Dynein regulatory complex protein 11 (Iqca1), found in Mus musculus (Mouse).